Here is a 497-residue protein sequence, read N- to C-terminus: Paired box protein Pax-2-A (497 aa).

The paired DNA-binding region spans 16–142 (GHGGVNQLGG…SSINRIIRTK (127 aa)). A PAI subdomain region spans residues 19-75 (GVNQLGGVFVNGRPLPDVVRQRIVELAHQGVRPCDISRQLRVSHGCVSKILGRYYET). The segment at 94–142 (KVVDKIAEYKRQNPTMFAWEIRDRLLAEGICDNDTVPSVSSINRIIRTK) is RED subdomain. A disordered region spans residues 143–224 (VQQPFHPTPD…GDSQSSVESL (82 aa)). A compositionally biased stretch (low complexity) spans 166–178 (VPSTASPPVSSAS).

In terms of tissue distribution, expression becomes spatially localized at mid-gastrula stages and is confined to the nervous system (midbrain, hindbrain, spinal cord), sensory organs (optic vesicle and stalk, otic vesicle), visceral arches, developing excretory system (pronephros, pronephric duct, rectal diverticulum, proctodaeum) and thyroid gland. Splicing does not appear to be tissue-specific and tissues displayed the same spectrum of splice variants.

The protein localises to the nucleus. Probable transcription factor. Involved in kidney development, acting synergistically with lhx1/lim-1 in pronephric morphogenesis during the tailbud stages. In Xenopus laevis (African clawed frog), this protein is Paired box protein Pax-2-A (pax2-a).